The primary structure comprises 1165 residues: Disease resistance protein RPS4B (1165 aa).

A TIR domain is found at 12–174 (PQHQVFINFR…EIVKEVKKVL (163 aa)). Glutamate 86 is a catalytic residue. The NB-ARC domain occupies 211-474 (KQRLKELEEK…FLDIACFRSQ (264 aa)). Residues 592–613 (SHCPHECLTNNKINMPDGLELP) form an LRR 1 repeat. An LRR 2; degenerate repeat occupies 614-635 (LKEVRCLHWLKFPLEELPNDFD). LRR repeat units follow at residues 636–659 (PINL…VKDT), 684–703 (NLQR…RDVN), 704–725 (LTSL…PLIP), 726–748 (ENLK…VGNL), 772–794 (LKTL…EINK), and 795–818 (SSLK…SVQY). One copy of the LRR 9; degenerate repeat lies at 819–836 (LCLSRNDHLIYLPAGINQ). The stretch at 837–863 (VSQLTRLDLKYCTKLTYVPELPPTLQY) is one LRR 10 repeat.

It belongs to the disease resistance TIR-NB-LRR family. As to quaternary structure, interacts with RRS1B. RPS4B-RRS1B heterodimer interacts with the bacterial effectors AvrRps4 and PopP2.

Its subcellular location is the nucleus. The enzyme catalyses NAD(+) + H2O = ADP-D-ribose + nicotinamide + H(+). Disease resistance (R) protein that specifically recognizes the AvrRps4 type III effector avirulence protein from P.syringae. Heterodimerization with RRS1B is required to form a functional complex to recognize AvrRps4 and to mediate the hypersensitive response. This Arabidopsis thaliana (Mouse-ear cress) protein is Disease resistance protein RPS4B.